A 771-amino-acid chain; its full sequence is Endoplasmin homolog (771 aa).

The N-terminal stretch at 1-24 is a signal peptide; that stretch reads MANSSLLRVVLVALLLLGSVTVSA. Positions 63, 109, and 160 each coordinate ATP. N63 carries an N-linked (GlcNAc...) asparagine glycan. The tract at residues 253–282 is disordered; it reads TAATPEPAAEEGSLDEGAVEEDPDKEGDTQ. Residues 260-277 are compositionally biased toward acidic residues; it reads AAEEGSLDEGAVEEDPDK. N-linked (GlcNAc...) asparagine glycans are attached at residues N306 and N402. The interval 727 to 771 is disordered; it reads ADDSLLPPDDAEYTVSDTEAEEEEEQPKVDANADEEAEAVGEDDL. The segment covering 758-771 has biased composition (acidic residues); it reads NADEEAEAVGEDDL. A Prevents secretion from ER motif is present at residues 768–771; sequence EDDL.

Belongs to the heat shock protein 90 family. Homotetramer.

The protein localises to the endoplasmic reticulum. Functionally, molecular chaperone that functions in the processing and transport of secreted proteins. Required for the synthesis of lipophosphoglycan (LPG), a cell surface glycoconjugate. Necessary for the attachment of the galactosyl residue to the mannose within the phosphoglycan repeats of the nascent LPG chain. Also required for addition of phosphoglycan to acid phosphatase. Not required for normal growth. Has ATPase activity. Binds heparin with micromolar affinity which may facilitate infection of host cells. In Leishmania infantum, this protein is Endoplasmin homolog.